Consider the following 237-residue polypeptide: Class B acid phosphatase (237 aa).

The signal sequence occupies residues M1–A23. D69 serves as the catalytic Nucleophile. 2 residues coordinate Mg(2+): D69 and D71. D71 (proton donor) is an active-site residue. Substrate-binding positions include T137–G138 and K177. Residue D192 coordinates Mg(2+).

Belongs to the class B bacterial acid phosphatase family. As to quaternary structure, homotetramer. Mg(2+) is required as a cofactor.

The protein resides in the periplasm. The catalysed reaction is a phosphate monoester + H2O = an alcohol + phosphate. Nucleosides, and particularly 2'-deoxyribonucleosides, are potent inhibitors of the phosphatase activity. The phosphatase activity is also inhibited by inorganic phosphate and EDTA in vitro. In terms of biological role, dephosphorylates several organic phosphate monoesters such as 3'-UMP, 5'-UMP and pNPP. Also has a phosphotransferase activity catalyzing the transfer of low-energy phosphate groups from organic phosphate monoesters to free hydroxyl groups of various organic compounds such as the 2'-, 3-, or 5'-hydroxyls of nucleosides and nucleotides. Also displays significant phosphomutase activity since it is able to catalyze the transfer of the phosphate group of 3'-AMP from the 3'-position both to the 2'- and 5'-positions. One of the physiological functions of the phosphohydrolytic activity of the enzyme is believed to be the scavenging of organic phosphate esters that otherwise cannot pass the cytoplasmic membrane. This chain is Class B acid phosphatase (aphA), found in Salmonella typhimurium (strain LT2 / SGSC1412 / ATCC 700720).